We begin with the raw amino-acid sequence, 58 residues long: MDHRLLEIIACPVCNGKLSFNQEHQELVCKIDRLAFPLRDGIPVMLESEARPLPQEEN.

It belongs to the UPF0434 family.

The chain is UPF0434 protein NT01EI_2448 from Edwardsiella ictaluri (strain 93-146).